Here is a 439-residue protein sequence, read N- to C-terminus: ATP-dependent protease ATPase subunit HslU (439 aa).

Residues isoleucine 17, 59 to 64 (GVGKTE), aspartate 251, glutamate 317, and arginine 389 contribute to the ATP site.

Belongs to the ClpX chaperone family. HslU subfamily. As to quaternary structure, a double ring-shaped homohexamer of HslV is capped on each side by a ring-shaped HslU homohexamer. The assembly of the HslU/HslV complex is dependent on binding of ATP.

It localises to the cytoplasm. In terms of biological role, ATPase subunit of a proteasome-like degradation complex; this subunit has chaperone activity. The binding of ATP and its subsequent hydrolysis by HslU are essential for unfolding of protein substrates subsequently hydrolyzed by HslV. HslU recognizes the N-terminal part of its protein substrates and unfolds these before they are guided to HslV for hydrolysis. This is ATP-dependent protease ATPase subunit HslU from Campylobacter jejuni subsp. jejuni serotype O:2 (strain ATCC 700819 / NCTC 11168).